The following is a 211-amino-acid chain: Large ribosomal subunit protein bL25 (211 aa).

This sequence belongs to the bacterial ribosomal protein bL25 family. CTC subfamily. In terms of assembly, part of the 50S ribosomal subunit; part of the 5S rRNA/L5/L18/L25 subcomplex. Contacts the 5S rRNA. Binds to the 5S rRNA independently of L5 and L18.

Functionally, this is one of the proteins that binds to the 5S RNA in the ribosome where it forms part of the central protuberance. The polypeptide is Large ribosomal subunit protein bL25 (Methylobacterium nodulans (strain LMG 21967 / CNCM I-2342 / ORS 2060)).